The following is a 283-amino-acid chain: 2-dehydro-3-deoxyphosphooctonate aldolase (283 aa).

Belongs to the KdsA family.

It localises to the cytoplasm. It catalyses the reaction D-arabinose 5-phosphate + phosphoenolpyruvate + H2O = 3-deoxy-alpha-D-manno-2-octulosonate-8-phosphate + phosphate. It participates in carbohydrate biosynthesis; 3-deoxy-D-manno-octulosonate biosynthesis; 3-deoxy-D-manno-octulosonate from D-ribulose 5-phosphate: step 2/3. The protein operates within bacterial outer membrane biogenesis; lipopolysaccharide biosynthesis. The chain is 2-dehydro-3-deoxyphosphooctonate aldolase from Parasynechococcus marenigrum (strain WH8102).